A 319-amino-acid chain; its full sequence is MSKKTKQELENNKLSKRLRHAVGDTINDFNMIEPGDKIMVCLSGGKDSYALLDILRRLQASAPIDFELVAVNLDQKQPGFPEEVLPTYLESIGVPYKIVEEDTYSTVKRVLDEGKTTCSLCSRLRRGILYRTAKELGCTKIALGHHRDDILATMFLNMFYGGKLKAMPPKLVSDNGEHIVIRPLAYVKEKDLIKYAELKQFPIIPCNLCGSQPNLQRQVIGDMLRDWDKRFPGRIESMFSALQNVVPSHLADTELFDFAGLERGQNLKHGGDLAFDSEKMPERFSDGSEEDESEIKIEPQKAERKVINILANKPKTCGP.

The PP-loop motif signature appears at 43–48 (SGGKDS). [4Fe-4S] cluster-binding residues include C118, C121, and C209. Positions 272–297 (DLAFDSEKMPERFSDGSEEDESEIKI) are disordered. The segment covering 276-286 (DSEKMPERFSD) has biased composition (basic and acidic residues).

The protein belongs to the TtcA family. Homodimer. Mg(2+) serves as cofactor. It depends on [4Fe-4S] cluster as a cofactor.

Its subcellular location is the cytoplasm. The catalysed reaction is cytidine(32) in tRNA + S-sulfanyl-L-cysteinyl-[cysteine desulfurase] + AH2 + ATP = 2-thiocytidine(32) in tRNA + L-cysteinyl-[cysteine desulfurase] + A + AMP + diphosphate + H(+). Its pathway is tRNA modification. Catalyzes the ATP-dependent 2-thiolation of cytidine in position 32 of tRNA, to form 2-thiocytidine (s(2)C32). The sulfur atoms are provided by the cysteine/cysteine desulfurase (IscS) system. This chain is tRNA-cytidine(32) 2-sulfurtransferase, found in Neisseria gonorrhoeae (strain ATCC 700825 / FA 1090).